The sequence spans 568 residues: Proline--tRNA ligase (568 aa).

Belongs to the class-II aminoacyl-tRNA synthetase family. ProS type 1 subfamily. As to quaternary structure, homodimer.

It localises to the cytoplasm. It catalyses the reaction tRNA(Pro) + L-proline + ATP = L-prolyl-tRNA(Pro) + AMP + diphosphate. Functionally, catalyzes the attachment of proline to tRNA(Pro) in a two-step reaction: proline is first activated by ATP to form Pro-AMP and then transferred to the acceptor end of tRNA(Pro). As ProRS can inadvertently accommodate and process non-cognate amino acids such as alanine and cysteine, to avoid such errors it has two additional distinct editing activities against alanine. One activity is designated as 'pretransfer' editing and involves the tRNA(Pro)-independent hydrolysis of activated Ala-AMP. The other activity is designated 'posttransfer' editing and involves deacylation of mischarged Ala-tRNA(Pro). The misacylated Cys-tRNA(Pro) is not edited by ProRS. This Listeria monocytogenes serovar 1/2a (strain ATCC BAA-679 / EGD-e) protein is Proline--tRNA ligase.